The following is a 79-amino-acid chain: Cytochrome c oxidase subunit 7A1, mitochondrial (79 aa).

The transit peptide at 1–21 directs the protein to the mitochondrion; the sequence is MQALRVSQALIRSFSSTARNR. Residues 22–46 are Mitochondrial matrix-facing; the sequence is FQNRVREKQKLFQEDNDIPLYLKGG. A helical membrane pass occupies residues 47-75; the sequence is IVDNILYRVTMTLCLGGTVYSLYSLGWAS. The Mitochondrial intermembrane portion of the chain corresponds to 76-79; it reads FPRN.

It belongs to the cytochrome c oxidase VIIa family. As to quaternary structure, component of the complex IV (CIV, cytochrome c oxidase), a multisubunit enzyme composed of 14 subunits. The complex is composed of a catalytic core of 3 subunits MT-CO1, MT-CO2 and MT-CO3, encoded in the mitochondrial DNA, and 11 supernumerary subunits COX4I1 (or COX4I2), COX5A, COX5B, COX6A2 (or COX6A1), COX6B1 (or COX6B2), COX6C, COX7A1 (or COX7A2), COX7B, COX7C, COX8B and NDUFA4, which are encoded in the nuclear genome. The complex exists as a monomer or a dimer and forms supercomplexes (SCs) in the inner mitochondrial membrane with NADH-ubiquinone oxidoreductase (complex I, CI) and ubiquinol-cytochrome c oxidoreductase (cytochrome b-c1 complex, complex III, CIII), resulting in different assemblies (supercomplex SCI(1)III(2)IV(1) and megacomplex MCI(2)III(2)IV(2)).

Its subcellular location is the mitochondrion inner membrane. It participates in energy metabolism; oxidative phosphorylation. Component of the mitochondrial respiratory complex IV (CIV, also named cytochrome c oxidase complex), the last enzyme in the mitochondrial electron transport chain which drives oxidative phosphorylation. The CIV complex is the component of the respiratory chain that catalyzes the reduction of oxygen to water. Acts as an assembly factor that specifically drives the homodimerization of CIV complexes, mediating the formation of mitochondrial respiratory supercomplexes (respirasomes) containing two CIV: supercomplxes with two molecules of CIV show improved activity. Despite being highly expressed in brown adipose tissue, not required for thermogenesis. The sequence is that of Cytochrome c oxidase subunit 7A1, mitochondrial (COX7A1) from Homo sapiens (Human).